The sequence spans 481 residues: GTPase Obg (481 aa).

The region spanning 2-159 (TTFVDRVVLH…IDVVLELKSV (158 aa)) is the Obg domain. An OBG-type G domain is found at 160-330 (ADVGLVGYPS…LMYAMGELVT (171 aa)). Residues 166–173 (GYPSAGKS), 191–195 (FTTLV), 212–215 (DVPG), 282–285 (NKVD), and 311–313 (SAA) each bind GTP. The Mg(2+) site is built by Ser-173 and Thr-193. The OCT domain maps to 348-426 (PKAVDDAGFT…IGEREFDWQP (79 aa)). Residues 439 to 452 (GDQRLAEKSERPSA) show a composition bias toward basic and acidic residues. The interval 439–481 (GDQRLAEKSERPSATERLAARKARRQRPEDEAEADEPVGDGEE) is disordered. A compositionally biased stretch (acidic residues) spans 468-481 (DEAEADEPVGDGEE).

The protein belongs to the TRAFAC class OBG-HflX-like GTPase superfamily. OBG GTPase family. In terms of assembly, monomer. Mg(2+) is required as a cofactor.

The protein resides in the cytoplasm. Its function is as follows. An essential GTPase which binds GTP, GDP and possibly (p)ppGpp with moderate affinity, with high nucleotide exchange rates and a fairly low GTP hydrolysis rate. Plays a role in control of the cell cycle, stress response, ribosome biogenesis and in those bacteria that undergo differentiation, in morphogenesis control. This chain is GTPase Obg, found in Salinispora tropica (strain ATCC BAA-916 / DSM 44818 / JCM 13857 / NBRC 105044 / CNB-440).